The chain runs to 490 residues: MSGFRLIDIVKPILPILPEVELPFEKLPFDDKIVYTIFAGLIYLFAQFPLVGLPKATTPNVNDPIYFLRGVFGCEPRTLLEFGLFPNISSGLILQLLAGLKVIKVNFKIQSDRELFQSLTKVFAIVQYVILTNIFIFAGYFGDDLSVVQIGLINFQLVGAGIFTTLLAEVIDKGFGFSSGAMIINTVVIATNLVADTFGVSQIKVGEDDQTEAQGALINLIQGLRSKHKTFIGGIISAFNRDYLPNLTTTIIVLAIAIIVCYLQSVRVELPIRSTRARGTNNVYPIKLLYTGCLSVLFSYTILFYIHIFAFVLIQLVAKNEPTHIICKIMGHYENANNLLAVPTFPLSLLAPPTSFFKGVTQQPLTFITYSAFILVTGIWFADKWQAISGSSARDVALEFKDQGITLMGRREQNVAKELNKVIPIAAVTGASVLSLITVIGESLGLKGKAAGIVVGIAGGFSLLEVITIEYQQSGGQSALNQVLGVPGAM.

Residues 1 to 32 (MSGFRLIDIVKPILPILPEVELPFEKLPFDDK) are Cytoplasmic-facing. Residues 33 to 53 (IVYTIFAGLIYLFAQFPLVGL) form a helical membrane-spanning segment. The Lumenal portion of the chain corresponds to 54–121 (PKATTPNVND…DRELFQSLTK (68 aa)). Residues 122–142 (VFAIVQYVILTNIFIFAGYFG) form a helical membrane-spanning segment. At 143–146 (DDLS) the chain is on the cytoplasmic side. A helical transmembrane segment spans residues 147 to 167 (VVQIGLINFQLVGAGIFTTLL). Topologically, residues 168 to 174 (AEVIDKG) are lumenal. Residues 175–195 (FGFSSGAMIINTVVIATNLVA) form a helical membrane-spanning segment. The Cytoplasmic portion of the chain corresponds to 196-242 (DTFGVSQIKVGEDDQTEAQGALINLIQGLRSKHKTFIGGIISAFNRD). A helical transmembrane segment spans residues 243-263 (YLPNLTTTIIVLAIAIIVCYL). Residues 264 to 293 (QSVRVELPIRSTRARGTNNVYPIKLLYTGC) lie on the Lumenal side of the membrane. Residues 294-314 (LSVLFSYTILFYIHIFAFVLI) traverse the membrane as a helical segment. At 315–339 (QLVAKNEPTHIICKIMGHYENANNL) the chain is on the cytoplasmic side. Residues 340 to 360 (LAVPTFPLSLLAPPTSFFKGV) form a helical membrane-spanning segment. Position 361 (T361) is a topological domain, lumenal. A helical membrane pass occupies residues 362 to 382 (QQPLTFITYSAFILVTGIWFA). Over 383 to 421 (DKWQAISGSSARDVALEFKDQGITLMGRREQNVAKELNK) the chain is Cytoplasmic. Residues 422–442 (VIPIAAVTGASVLSLITVIGE) traverse the membrane as a helical segment. The Lumenal portion of the chain corresponds to 443 to 449 (SLGLKGK). Residues 450–470 (AAGIVVGIAGGFSLLEVITIE) form a helical membrane-spanning segment. The Cytoplasmic segment spans residues 471–490 (YQQSGGQSALNQVLGVPGAM).

The protein belongs to the SecY/SEC61-alpha family. Component of the heterotrimeric Ssh1 complex, which is composed of SSH1, SBH2 and SSS1.

It localises to the endoplasmic reticulum membrane. Its function is as follows. Part of the Ssh1 complex, which probably is the major component of a channel-forming translocon complex that may function exclusively in the cotranslational pathway of protein endoplasmic reticulum (ER) import. The chain is Sec sixty-one protein homolog (SSH1) from Saccharomyces cerevisiae (strain ATCC 204508 / S288c) (Baker's yeast).